Consider the following 196-residue polypeptide: Imidazole glycerol phosphate synthase subunit HisH (196 aa).

The Glutamine amidotransferase type-1 domain maps to 2–196; it reads NVVILDTGCA…AKLLKNFLEM (195 aa). The active-site Nucleophile is Cys-77. Catalysis depends on residues His-178 and Glu-180.

As to quaternary structure, heterodimer of HisH and HisF.

It localises to the cytoplasm. It catalyses the reaction 5-[(5-phospho-1-deoxy-D-ribulos-1-ylimino)methylamino]-1-(5-phospho-beta-D-ribosyl)imidazole-4-carboxamide + L-glutamine = D-erythro-1-(imidazol-4-yl)glycerol 3-phosphate + 5-amino-1-(5-phospho-beta-D-ribosyl)imidazole-4-carboxamide + L-glutamate + H(+). The enzyme catalyses L-glutamine + H2O = L-glutamate + NH4(+). The protein operates within amino-acid biosynthesis; L-histidine biosynthesis; L-histidine from 5-phospho-alpha-D-ribose 1-diphosphate: step 5/9. IGPS catalyzes the conversion of PRFAR and glutamine to IGP, AICAR and glutamate. The HisH subunit catalyzes the hydrolysis of glutamine to glutamate and ammonia as part of the synthesis of IGP and AICAR. The resulting ammonia molecule is channeled to the active site of HisF. The chain is Imidazole glycerol phosphate synthase subunit HisH from Shigella flexneri.